The following is a 76-amino-acid chain: uncharacterized protein (76 aa).

The tract at residues 1–28 (MSTEKLEASEEPQAPLANTSETNSIKGD) is disordered. Residues 16–26 (LANTSETNSIK) show a composition bias toward polar residues.

It localises to the cytoplasm. The protein localises to the bud. Its subcellular location is the bud neck. This is an uncharacterized protein from Saccharomyces cerevisiae (strain ATCC 204508 / S288c) (Baker's yeast).